The chain runs to 391 residues: Processive diacylglycerol beta-glucosyltransferase (391 aa).

It belongs to the glycosyltransferase 28 family. UgtP subfamily.

The protein resides in the cell membrane. The catalysed reaction is a 1,2-diacyl-3-O-(beta-D-glucopyranosyl)-sn-glycerol + UDP-alpha-D-glucose = a 1,2-diacyl-3-O-(beta-D-Glc-(1-&gt;6)-beta-D-Glc)-sn-glycerol + UDP + H(+). The enzyme catalyses a 1,2-diacyl-sn-glycerol + UDP-alpha-D-glucose = a 1,2-diacyl-3-O-(beta-D-glucopyranosyl)-sn-glycerol + UDP + H(+). The protein operates within glycolipid metabolism; diglucosyl-diacylglycerol biosynthesis. Functionally, processive glucosyltransferase involved in the biosynthesis of both the bilayer- and non-bilayer-forming membrane glucolipids. Is able to successively transfer two glucosyl residues to diacylglycerol (DAG), thereby catalyzing the formation of beta-monoglucosyl-DAG (3-O-(beta-D-glucopyranosyl)-1,2-diacyl-sn-glycerol) and beta-diglucosyl-DAG (3-O-(beta-D-glucopyranosyl-beta-(1-&gt;6)-D-glucopyranosyl)-1,2-diacyl-sn-glycerol). Beta-diglucosyl-DAG is the predominant glycolipid found in Bacillales and is also used as a membrane anchor for lipoteichoic acid (LTA). The sequence is that of Processive diacylglycerol beta-glucosyltransferase from Staphylococcus epidermidis (strain ATCC 35984 / DSM 28319 / BCRC 17069 / CCUG 31568 / BM 3577 / RP62A).